A 317-amino-acid polypeptide reads, in one-letter code: Prenyl transferase paxC (317 aa).

Substrate-binding residues include K53 and H86. Mg(2+) is bound by residues D93 and D97. 6 residues coordinate substrate: R102, K186, T187, Q216, N223, and K233.

This sequence belongs to the FPP/GGPP synthase family.

It participates in secondary metabolite biosynthesis. Prenyl transferase; part of the gene cluster that mediates the biosynthesis of paxalline, a mycotoxin that acts as an inhibitor of mammalian maxi-K channels. PaxG, the geranylgeranyl diphosphate (GGPP) synthase is proposed to catalyze the first step in paxilline biosynthesis. Condensation of indole-3-glycerol phosphate with GGPP by paxC then forms 3-geranylgeranylindole (3-GGI), followed by epoxidation and cyclization of this intermediate (by paxM and paxB) to form paspaline. Paspaline is subsequently converted to 13-desoxypaxilline by paxP, the latter being then converted to paxilline by paxQ. Finally paxilline can be mono- and di-prenylated by paxD. This chain is Prenyl transferase paxC, found in Penicillium paxilli.